A 163-amino-acid polypeptide reads, in one-letter code: Low molecular weight protein-tyrosine phosphatase A (163 aa).

Cys11 acts as the Nucleophile in catalysis. Arg17 is a catalytic residue. The Proton donor role is filled by Asp126.

It belongs to the low molecular weight phosphotyrosine protein phosphatase family.

It catalyses the reaction O-phospho-L-tyrosyl-[protein] + H2O = L-tyrosyl-[protein] + phosphate. Key virulence factor required for mycobacterial survival within host macrophages. Exhibits protein tyrosine phosphatase activity. Its function is as follows. Supports mycobacteria survival during infection by modulation of the phagosome maturation and modulation of the normal host signaling pathways, including host innate immune responses and cell apoptosis. This chain is Low molecular weight protein-tyrosine phosphatase A (ptpA), found in Mycobacterium bovis (strain ATCC BAA-935 / AF2122/97).